Consider the following 445-residue polypeptide: Phosphoglucosamine mutase 1 (445 aa).

The active-site Phosphoserine intermediate is S102. Positions 102, 241, 243, and 245 each coordinate Mg(2+). Phosphoserine is present on S102.

The protein belongs to the phosphohexose mutase family. Requires Mg(2+) as cofactor. In terms of processing, activated by phosphorylation.

The enzyme catalyses alpha-D-glucosamine 1-phosphate = D-glucosamine 6-phosphate. Its function is as follows. Catalyzes the conversion of glucosamine-6-phosphate to glucosamine-1-phosphate. The sequence is that of Phosphoglucosamine mutase 1 from Shewanella frigidimarina (strain NCIMB 400).